A 631-amino-acid polypeptide reads, in one-letter code: DNA mismatch repair protein MutL (631 aa).

Disordered regions lie at residues 337–362 (PHSPQIDDSSPYVKPETESSAFELQS) and 400–429 (AVQSNAFGSMSVPRETRSGSSGESRPRAEL).

It belongs to the DNA mismatch repair MutL/HexB family.

In terms of biological role, this protein is involved in the repair of mismatches in DNA. It is required for dam-dependent methyl-directed DNA mismatch repair. May act as a 'molecular matchmaker', a protein that promotes the formation of a stable complex between two or more DNA-binding proteins in an ATP-dependent manner without itself being part of a final effector complex. The protein is DNA mismatch repair protein MutL of Shewanella oneidensis (strain ATCC 700550 / JCM 31522 / CIP 106686 / LMG 19005 / NCIMB 14063 / MR-1).